The sequence spans 464 residues: ATP-dependent protease ATPase subunit HslU (464 aa).

ATP-binding positions include I22, 64-69 (GVGKTE), D275, E340, and R412.

This sequence belongs to the ClpX chaperone family. HslU subfamily. A double ring-shaped homohexamer of HslV is capped on each side by a ring-shaped HslU homohexamer. The assembly of the HslU/HslV complex is dependent on binding of ATP.

The protein localises to the cytoplasm. Functionally, ATPase subunit of a proteasome-like degradation complex; this subunit has chaperone activity. The binding of ATP and its subsequent hydrolysis by HslU are essential for unfolding of protein substrates subsequently hydrolyzed by HslV. HslU recognizes the N-terminal part of its protein substrates and unfolds these before they are guided to HslV for hydrolysis. The polypeptide is ATP-dependent protease ATPase subunit HslU (Cytophaga hutchinsonii (strain ATCC 33406 / DSM 1761 / CIP 103989 / NBRC 15051 / NCIMB 9469 / D465)).